The primary structure comprises 341 residues: S-adenosylmethionine:tRNA ribosyltransferase-isomerase (341 aa).

This sequence belongs to the QueA family. Monomer.

It localises to the cytoplasm. It catalyses the reaction 7-aminomethyl-7-carbaguanosine(34) in tRNA + S-adenosyl-L-methionine = epoxyqueuosine(34) in tRNA + adenine + L-methionine + 2 H(+). Its pathway is tRNA modification; tRNA-queuosine biosynthesis. Its function is as follows. Transfers and isomerizes the ribose moiety from AdoMet to the 7-aminomethyl group of 7-deazaguanine (preQ1-tRNA) to give epoxyqueuosine (oQ-tRNA). This chain is S-adenosylmethionine:tRNA ribosyltransferase-isomerase, found in Alkaliphilus metalliredigens (strain QYMF).